Here is a 377-residue protein sequence, read N- to C-terminus: Mitogen-activated protein kinase mpkC (377 aa).

The Protein kinase domain maps to Y20–L299. ATP-binding positions include I26–V34 and K49. D141 acts as the Proton acceptor in catalysis. The residue at position 171 (T171) is a Phosphothreonine. Positions T171 to Y173 match the TXY motif. Y173 is subject to Phosphotyrosine.

The protein belongs to the protein kinase superfamily. Ser/Thr protein kinase family. MAP kinase subfamily. HOG1 sub-subfamily. Requires Mg(2+) as cofactor. In terms of processing, dually phosphorylated on Thr-171 and Tyr-173, which activates the enzyme.

The enzyme catalyses L-seryl-[protein] + ATP = O-phospho-L-seryl-[protein] + ADP + H(+). It catalyses the reaction L-threonyl-[protein] + ATP = O-phospho-L-threonyl-[protein] + ADP + H(+). Its activity is regulated as follows. Activated by tyrosine and threonine phosphorylation. Mitogen-activated protein kinase required for growth on media where sorbitol or mannitol is the sole carbon source. The protein is Mitogen-activated protein kinase mpkC (mpkc) of Neosartorya fischeri (strain ATCC 1020 / DSM 3700 / CBS 544.65 / FGSC A1164 / JCM 1740 / NRRL 181 / WB 181) (Aspergillus fischerianus).